An 87-amino-acid chain; its full sequence is Small ribosomal subunit protein eS21 (87 aa).

This sequence belongs to the eukaryotic ribosomal protein eS21 family. In terms of assembly, component of the small ribosomal subunit. Mature ribosomes consist of a small (40S) and a large (60S) subunit. The 40S subunit contains about 33 different proteins and 1 molecule of RNA (18S). The 60S subunit contains about 49 different proteins and 3 molecules of RNA (25S, 5.8S and 5S).

It localises to the cytoplasm. In terms of biological role, required for the processing of the 20S rRNA-precursor to mature 18S rRNA in a late step of the maturation of 40S ribosomal subunits. Has a physiological role leading to 18S rRNA stability. The protein is Small ribosomal subunit protein eS21 (RPS21) of Kluyveromyces lactis (strain ATCC 8585 / CBS 2359 / DSM 70799 / NBRC 1267 / NRRL Y-1140 / WM37) (Yeast).